The chain runs to 299 residues: MLTELVDLPGGSFRMGSTRFYPEEAPIHTVTVRAFAVERHPVTNAQFAEFVSATGYVTVAEQPLDPGLYPGVDAADLCPGAMVFCPTAGPVDLRDWRQWWDWVPGACWRHPFGRDSDIADRAGHPVVQVAYPDAVAYARWAGRRLPTEAEWEYAARGGTTATYAWGDQEKPGGMLMANTWQGRFPYRNDGALGWVGTSPVGRFPANGFGLLDMIGNVWEWTTTEFYPHHRIDPPSTACCAPVKLATAADPTISQTLKGGSHLCAPEYCHRYRPAARSPQSQDTATTHIGFRCVADPVSG.

Residues C263 and C268 each contribute to the Cu cation site.

This sequence belongs to the sulfatase-modifying factor family. Cu cation serves as cofactor.

The enzyme catalyses L-cysteinyl-[sulfatase] + 2 a thiol + O2 = an organic disulfide + 3-oxo-L-alanyl-[sulfatase] + hydrogen sulfide + H2O + H(+). It participates in protein modification; sulfatase oxidation. Oxidase that catalyzes the conversion of cysteine to 3-oxoalanine on target proteins. 3-oxoalanine modification, which is also named formylglycine (fGly), occurs in the maturation of arylsulfatases and some alkaline phosphatases that use the hydrated form of 3-oxoalanine as a catalytic nucleophile. This chain is Formylglycine-generating enzyme, found in Mycobacterium tuberculosis (strain ATCC 25618 / H37Rv).